The following is a 136-amino-acid chain: UPF0213 protein ASA_0550 (136 aa).

A GIY-YIG domain is found at 17–92 (GQWSIYLVRT…KQQSKAFKER (76 aa)).

Belongs to the UPF0213 family.

The protein is UPF0213 protein ASA_0550 of Aeromonas salmonicida (strain A449).